Reading from the N-terminus, the 94-residue chain is Elongation factor 1-beta (94 aa).

This sequence belongs to the EF-1-beta/EF-1-delta family.

Functionally, promotes the exchange of GDP for GTP in EF-1-alpha/GDP, thus allowing the regeneration of EF-1-alpha/GTP that could then be used to form the ternary complex EF-1-alpha/GTP/AAtRNA. The chain is Elongation factor 1-beta from Ignicoccus hospitalis (strain KIN4/I / DSM 18386 / JCM 14125).